The following is a 140-amino-acid chain: Sperm protein associated with the nucleus on the X chromosome N3 (140 aa).

Composition is skewed to polar residues over residues 1–20 (MEQP…CKSN), 62–79 (INSN…SINP), and 131–140 (EGSSQDSGED). Positions 1-140 (MEQPTSSTNG…EGSSQDSGED (140 aa)) are disordered.

The protein belongs to the SPAN-X family.

This chain is Sperm protein associated with the nucleus on the X chromosome N3 (SPANXN3), found in Pan troglodytes (Chimpanzee).